The following is an 897-amino-acid chain: Pre-mRNA-splicing factor CWC22 homolog (897 aa).

Residues 1–10 show a composition bias toward polar residues; it reads MSSSRSQSPE. The tract at residues 1 to 155 is disordered; it reads MSSSRSQSPE…EKKKKEPLDI (155 aa). 3 stretches are compositionally biased toward basic and acidic residues: residues 36 to 54, 93 to 107, and 131 to 155; these read SSEK…REVS, RSKE…EKSP, and RSSE…PLDI. The MIF4G domain occupies 194-382; that stretch reads KKKIHGLVNR…ETAMQIRKDK (189 aa). A disordered region spans residues 444-472; sequence NADISDEDGGDELDDEEEGSDVEEAPKKT. Residues 447 to 466 show a composition bias toward acidic residues; the sequence is ISDEDGGDELDDEEEGSDVE. Positions 485–601 constitute an MI domain; that stretch reads AFRREVYLTM…DWKILADMKM (117 aa). Low complexity-rich tracts occupy residues 689 to 710 and 720 to 730; these read LDQL…SDSS and DSSSDSSSSSE. The tract at residues 689-897 is disordered; that stretch reads LDQLKAESSS…VESDDRRRRR (209 aa). The span at 743-897 shows a compositional bias: basic and acidic residues; sequence NSEESSKKKE…VESDDRRRRR (155 aa).

This sequence belongs to the CWC22 family. Expressed in germ cells, oocytes, and sperm cells.

Its subcellular location is the nucleus. It is found in the nucleus speckle. In terms of biological role, required for pre-mRNA splicing and for exon-junction complex (EJC) assembly. Hinders EIF4A3 from non-specifically binding RNA and escorts it to the splicing machinery to promote EJC assembly on mature mRNAs. Through its role in EJC assembly, required for nonsense-mediated mRNA decay. Plays a role in the nuclear retention of unspliced mRNAs. Plays a role in sex determination. Required for early embryogenesis and tissue differentiation. This Caenorhabditis elegans protein is Pre-mRNA-splicing factor CWC22 homolog.